Reading from the N-terminus, the 383-residue chain is tRNA-specific 2-thiouridylase MnmA (383 aa).

ATP is bound by residues 9–16 (GMSGGVDS) and methionine 35. Residues 95 to 97 (NPD) form an interaction with target base in tRNA region. The active-site Nucleophile is cysteine 100. Cysteine 100 and cysteine 196 form a disulfide bridge. An ATP-binding site is contributed by glycine 124. The interval 146–148 (KDQ) is interaction with tRNA. Cysteine 196 acts as the Cysteine persulfide intermediate in catalysis. The interval 308 to 309 (RY) is interaction with tRNA.

It belongs to the MnmA/TRMU family.

It localises to the cytoplasm. The enzyme catalyses S-sulfanyl-L-cysteinyl-[protein] + uridine(34) in tRNA + AH2 + ATP = 2-thiouridine(34) in tRNA + L-cysteinyl-[protein] + A + AMP + diphosphate + H(+). Catalyzes the 2-thiolation of uridine at the wobble position (U34) of tRNA, leading to the formation of s(2)U34. The polypeptide is tRNA-specific 2-thiouridylase MnmA (Burkholderia pseudomallei (strain 1106a)).